The following is a 113-amino-acid chain: Nucleoid-associated protein PMT_0025 (113 aa).

This sequence belongs to the YbaB/EbfC family. As to quaternary structure, homodimer.

The protein resides in the cytoplasm. It localises to the nucleoid. Functionally, binds to DNA and alters its conformation. May be involved in regulation of gene expression, nucleoid organization and DNA protection. The sequence is that of Nucleoid-associated protein PMT_0025 from Prochlorococcus marinus (strain MIT 9313).